An 878-amino-acid chain; its full sequence is Fanconi-associated nuclease 1 homolog (878 aa).

The UBZ4-type zinc finger occupies 32 to 59 (GKTCPLCNIKFSLASYRSHMNVCKVADD). Zn(2+)-binding residues include cysteine 35, cysteine 38, histidine 50, and cysteine 54. The tract at residues 88-180 (ENSGQEIPVN…QKSQSESQEA (93 aa)) is disordered. A compositionally biased stretch (basic and acidic residues) spans 142-161 (SEVRSVEKEIKKSPVWENRR). The segment covering 168–179 (QNSQKSQSESQE) has biased composition (low complexity). Mn(2+) contacts are provided by glutamate 695, aspartate 823, glutamate 838, and valine 839. A VRR-NUC domain is found at 757–870 (QETIEDNIRR…GIKAEVCHVE (114 aa)).

This sequence belongs to the FAN1 family. It depends on Mn(2+) as a cofactor. Requires Mg(2+) as cofactor.

The protein localises to the nucleus. The enzyme catalyses Hydrolytically removes 5'-nucleotides successively from the 3'-hydroxy termini of 3'-hydroxy-terminated oligonucleotides.. Functionally, nuclease required for the repair of DNA interstrand cross-links (ICL). Acts as a 5'-3' exonuclease that anchors at a cut end of DNA and cleaves DNA successively at every third nucleotide, allowing to excise an ICL from one strand through flanking incisions. The protein is Fanconi-associated nuclease 1 homolog (fan-1) of Caenorhabditis briggsae.